We begin with the raw amino-acid sequence, 144 residues long: Putative HTH-type transcriptional regulator aq_268 (144 aa).

Positions 2 to 133 (IFSDTVRYAL…KGTTIKDLIN (132 aa)) constitute an HTH rrf2-type domain.

In Aquifex aeolicus (strain VF5), this protein is Putative HTH-type transcriptional regulator aq_268.